A 154-amino-acid chain; its full sequence is 6,7-dimethyl-8-ribityllumazine synthase (154 aa).

5-amino-6-(D-ribitylamino)uracil is bound by residues Phe-26, 60–62, and 84–86; these read ALE and CII. Position 89-90 (89-90) interacts with (2S)-2-hydroxy-3-oxobutyl phosphate; sequence ET. The active-site Proton donor is His-92. 5-amino-6-(D-ribitylamino)uracil is bound at residue Asn-117. Arg-131 is a (2S)-2-hydroxy-3-oxobutyl phosphate binding site.

Belongs to the DMRL synthase family.

The enzyme catalyses (2S)-2-hydroxy-3-oxobutyl phosphate + 5-amino-6-(D-ribitylamino)uracil = 6,7-dimethyl-8-(1-D-ribityl)lumazine + phosphate + 2 H2O + H(+). The protein operates within cofactor biosynthesis; riboflavin biosynthesis; riboflavin from 2-hydroxy-3-oxobutyl phosphate and 5-amino-6-(D-ribitylamino)uracil: step 1/2. Functionally, catalyzes the formation of 6,7-dimethyl-8-ribityllumazine by condensation of 5-amino-6-(D-ribitylamino)uracil with 3,4-dihydroxy-2-butanone 4-phosphate. This is the penultimate step in the biosynthesis of riboflavin. This chain is 6,7-dimethyl-8-ribityllumazine synthase, found in Acidovorax sp. (strain JS42).